Here is a 1477-residue protein sequence, read N- to C-terminus: Ring canal kelch protein (1477 aa).

3 disordered regions span residues 19 to 62, 76 to 96, and 108 to 137; these read LSNG…PGLG, LLQQQQQQHHHHQNPAAEGSG, and SQNSLDESSQKHVQRPNGKERGTVGQYSNE. Residues 20–46 show a composition bias toward low complexity; that stretch reads SNGNSNNNNQQQQQQQQGQNPQQPAQN. 2 positions are modified to phosphoserine: serine 108 and serine 111. The region spanning 157-223 is the BTB domain; sequence CDVILVADDV…VYTATVEVNE (67 aa). Kelch repeat units lie at residues 404–449, 450–496, 498–543, 545–592, 594–639, and 641–687; these read ILLV…VLGD, KVYA…VLNG, IYAV…VVHG, LYAV…VLNN, LYAV…AHDG, and LYVV…MIDK. Position 690 (selenocysteine 690) is a non-standard amino acid, selenocysteine. 5 disordered regions span residues 744–841, 1119–1200, 1291–1326, 1359–1416, and 1446–1477; these read PAAP…PQRI, HSAA…GNGT, RDANASARPLHSTLSRLRNGEKRNPNRVAGNYQYED, PLLQ…FKPK, and PVSLSDNETETTSSQNNLPSTTNSNNLNEHND. 2 stretches are compositionally biased toward low complexity: residues 763-813 and 820-839; these read APIG…ANNN and AAPAPSQQQQQQQAQPQQPQ. A compositionally biased stretch (polar residues) spans 1125–1137; the sequence is IPSSSNINANRTT. The segment covering 1166–1192 has biased composition (low complexity); it reads KTTSTGSGKSVTLAKKTSTAAARSSSS. Composition is skewed to low complexity over residues 1374 to 1391 and 1456 to 1477; these read QQRRLQRQGAQAQQQSQQ and TTSSQNNLPSTTNSNNLNEHND.

Both proteins are expressed in ovaries, male testis, ovariectomized females, cuticle, salivary gland and imaginal disks. Kelch short protein is the predominant form and is also expressed in fat bodies. On entry into metamorphosis levels of full-length protein increase in testis and imaginal disks.

Its subcellular location is the cytoplasm. It is found in the cytoskeleton. In terms of biological role, component of ring canals that regulates the flow of cytoplasm between cells. May be involved in the regulation of cytoplasm flow from nurse cells to the oocyte during oogenesis. Binds actin. The chain is Ring canal kelch protein (kel) from Drosophila melanogaster (Fruit fly).